The following is a 292-amino-acid chain: G1/S-specific cyclin-D3 (292 aa).

A Cyclin N-terminal domain is found at valine 27–leucine 152. Residues leucine 255 to leucine 292 form a disordered region. Phosphoserine is present on residues serine 264 and serine 279. Positions glycine 272 to threonine 285 are enriched in low complexity. Threonine 283 is modified (phosphothreonine).

Belongs to the cyclin family. Cyclin D subfamily. In terms of assembly, interacts with the CDK4 and CDK6 protein kinases to form a serine/threonine kinase holoenzyme complex. The cyclin subunit imparts substrate specificity to the complex. Interacts with ATF5. Interacts with EIF3K. Component of the ternary complex cyclin D/CDK4/CDKN1B required for nuclear translocation and modulation of CDK4-mediated kinase activity. Can form similar complexes with either CDKN1A or CDKN2A. In terms of processing, phosphorylation at Thr-283 by MAP kinases is required for ubiquitination and degradation by the DCX(AMBRA1) complex. Post-translationally, ubiquitinated by the DCX(AMBRA1) complex during the transition from G1 to S cell phase, leading to its degradation: ubiquitination is dependent on Thr-283 phosphorylation. The DCX(AMBRA1) complex represents the major regulator of CCND3 stability during the G1/S transition. Polyubiquitinated by the SCF(FBXL2) complex, leading to proteasomal degradation.

The protein localises to the nucleus. Its subcellular location is the cytoplasm. Functionally, regulatory component of the cyclin D3-CDK4 (DC) complex that phosphorylates and inhibits members of the retinoblastoma (RB) protein family including RB1 and regulates the cell-cycle during G(1)/S transition. Phosphorylation of RB1 allows dissociation of the transcription factor E2F from the RB/E2F complex and the subsequent transcription of E2F target genes which are responsible for the progression through the G(1) phase. Hypophosphorylates RB1 in early G(1) phase. Cyclin D-CDK4 complexes are major integrators of various mitogenenic and antimitogenic signals. Component of the ternary complex, cyclin D3/CDK4/CDKN1B, required for nuclear translocation and activity of the cyclin D-CDK4 complex. Shows transcriptional coactivator activity with ATF5 independently of CDK4. The polypeptide is G1/S-specific cyclin-D3 (CCND3) (Bos taurus (Bovine)).